Reading from the N-terminus, the 172-residue chain is S-ribosylhomocysteine lyase (172 aa).

Fe cation contacts are provided by histidine 54, histidine 58, and cysteine 128.

It belongs to the LuxS family. As to quaternary structure, homodimer. The cofactor is Fe cation.

The enzyme catalyses S-(5-deoxy-D-ribos-5-yl)-L-homocysteine = (S)-4,5-dihydroxypentane-2,3-dione + L-homocysteine. Its function is as follows. Involved in the synthesis of autoinducer 2 (AI-2) which is secreted by bacteria and is used to communicate both the cell density and the metabolic potential of the environment. The regulation of gene expression in response to changes in cell density is called quorum sensing. Catalyzes the transformation of S-ribosylhomocysteine (RHC) to homocysteine (HC) and 4,5-dihydroxy-2,3-pentadione (DPD). The polypeptide is S-ribosylhomocysteine lyase (Vibrio parahaemolyticus serotype O3:K6 (strain RIMD 2210633)).